The chain runs to 670 residues: UvrABC system protein B (670 aa).

One can recognise a Helicase ATP-binding domain in the interval 26 to 183; the sequence is EGLEDGLAHQ…RRLAELQYAR (158 aa). 39-46 provides a ligand contact to ATP; the sequence is GVTGSGKT. Positions 92–115 match the Beta-hairpin motif; the sequence is YYDYYQPEAYVPSSDTFIEKDAAV. The region spanning 431–597 is the Helicase C-terminal domain; the sequence is QVDDLLSEIR…GLNKKVSDVL (167 aa). The 36-residue stretch at 630–665 folds into the UVR domain; it reads DQKIRELEAQMYTHAQNLEFELAAGLRDEIHQLREQ.

It belongs to the UvrB family. Forms a heterotetramer with UvrA during the search for lesions. Interacts with UvrC in an incision complex.

The protein localises to the cytoplasm. Its function is as follows. The UvrABC repair system catalyzes the recognition and processing of DNA lesions. A damage recognition complex composed of 2 UvrA and 2 UvrB subunits scans DNA for abnormalities. Upon binding of the UvrA(2)B(2) complex to a putative damaged site, the DNA wraps around one UvrB monomer. DNA wrap is dependent on ATP binding by UvrB and probably causes local melting of the DNA helix, facilitating insertion of UvrB beta-hairpin between the DNA strands. Then UvrB probes one DNA strand for the presence of a lesion. If a lesion is found the UvrA subunits dissociate and the UvrB-DNA preincision complex is formed. This complex is subsequently bound by UvrC and the second UvrB is released. If no lesion is found, the DNA wraps around the other UvrB subunit that will check the other stand for damage. The chain is UvrABC system protein B from Serratia proteamaculans (strain 568).